The sequence spans 800 residues: Putative antiporter subunit mnhA2 (800 aa).

20 helical membrane-spanning segments follow: residues 1–21 (MSLV…LLMS), 33–53 (IALV…PSVA), 78–98 (GLSL…FFYA), 118–138 (LFMF…MYIF), 167–187 (FMIT…LYIM), 207–227 (GLFI…SAQF), 241–261 (TPVS…FLLL), 273–293 (YIYI…ITAL), 300–320 (GILA…VGIG), 331–351 (IASI…NHAI), 387–407 (LVMT…GFLS), 424–444 (FSLI…IFTF), 472–492 (PWLF…IFFV), 527–547 (GFNI…VLAI), 595–615 (IIMT…RIGL), 627–647 (GALE…LIFI), 651–671 (LTMV…FIAM), 676–696 (LALT…VSFS), 712–732 (IIKI…IFIT), and 768–788 (LDTL…YTLL).

The protein belongs to the CPA3 antiporters (TC 2.A.63) subunit A family. As to quaternary structure, may form a heterooligomeric complex that consists of seven subunits: mnhA2, mnhB2, mnhC2, mnhD2, mnhE2, mnhF2 and mnhG2.

It localises to the cell membrane. The sequence is that of Putative antiporter subunit mnhA2 (mnhA2) from Staphylococcus aureus (strain Mu3 / ATCC 700698).